The following is a 311-amino-acid chain: Aspartate carbamoyltransferase catalytic subunit (311 aa).

Positions 55 and 56 each coordinate carbamoyl phosphate. Residue K85 participates in L-aspartate binding. R106, H135, and Q138 together coordinate carbamoyl phosphate. 2 residues coordinate L-aspartate: R168 and R230. 2 residues coordinate carbamoyl phosphate: L268 and P269.

The protein belongs to the aspartate/ornithine carbamoyltransferase superfamily. ATCase family. In terms of assembly, heterododecamer (2C3:3R2) of six catalytic PyrB chains organized as two trimers (C3), and six regulatory PyrI chains organized as three dimers (R2).

It carries out the reaction carbamoyl phosphate + L-aspartate = N-carbamoyl-L-aspartate + phosphate + H(+). The protein operates within pyrimidine metabolism; UMP biosynthesis via de novo pathway; (S)-dihydroorotate from bicarbonate: step 2/3. Functionally, catalyzes the condensation of carbamoyl phosphate and aspartate to form carbamoyl aspartate and inorganic phosphate, the committed step in the de novo pyrimidine nucleotide biosynthesis pathway. The sequence is that of Aspartate carbamoyltransferase catalytic subunit from Cronobacter sakazakii (strain ATCC BAA-894) (Enterobacter sakazakii).